The chain runs to 729 residues: Fatty acid oxidation complex subunit alpha (729 aa).

The enoyl-CoA hydratase/isomerase stretch occupies residues 1 to 189 (MLYKGDTLYL…KIGLVDGVVA (189 aa)). A substrate-binding site is contributed by Asp-296. A 3-hydroxyacyl-CoA dehydrogenase region spans residues 311-729 (ETPKHAAVLG…ARPVGALKTA (419 aa)). NAD(+) contacts are provided by residues Met-324, Asp-343, 400 to 402 (VVE), Lys-407, and Ser-429. Residue His-450 is the For 3-hydroxyacyl-CoA dehydrogenase activity of the active site. Residue Asn-453 participates in NAD(+) binding. The substrate site is built by Asn-500 and Tyr-660.

It in the N-terminal section; belongs to the enoyl-CoA hydratase/isomerase family. This sequence in the C-terminal section; belongs to the 3-hydroxyacyl-CoA dehydrogenase family. As to quaternary structure, heterotetramer of two alpha chains (FadB) and two beta chains (FadA).

It carries out the reaction a (3S)-3-hydroxyacyl-CoA + NAD(+) = a 3-oxoacyl-CoA + NADH + H(+). The enzyme catalyses a (3S)-3-hydroxyacyl-CoA = a (2E)-enoyl-CoA + H2O. It catalyses the reaction a 4-saturated-(3S)-3-hydroxyacyl-CoA = a (3E)-enoyl-CoA + H2O. The catalysed reaction is (3S)-3-hydroxybutanoyl-CoA = (3R)-3-hydroxybutanoyl-CoA. It carries out the reaction a (3Z)-enoyl-CoA = a 4-saturated (2E)-enoyl-CoA. The enzyme catalyses a (3E)-enoyl-CoA = a 4-saturated (2E)-enoyl-CoA. The protein operates within lipid metabolism; fatty acid beta-oxidation. Its function is as follows. Involved in the aerobic and anaerobic degradation of long-chain fatty acids via beta-oxidation cycle. Catalyzes the formation of 3-oxoacyl-CoA from enoyl-CoA via L-3-hydroxyacyl-CoA. It can also use D-3-hydroxyacyl-CoA and cis-3-enoyl-CoA as substrate. In Klebsiella pneumoniae (strain 342), this protein is Fatty acid oxidation complex subunit alpha.